A 496-amino-acid chain; its full sequence is Glycogen synthase (496 aa).

Lys-24 contributes to the ADP-alpha-D-glucose binding site.

The protein belongs to the glycosyltransferase 1 family. Bacterial/plant glycogen synthase subfamily.

The enzyme catalyses [(1-&gt;4)-alpha-D-glucosyl](n) + ADP-alpha-D-glucose = [(1-&gt;4)-alpha-D-glucosyl](n+1) + ADP + H(+). The protein operates within glycan biosynthesis; glycogen biosynthesis. Synthesizes alpha-1,4-glucan chains using ADP-glucose. This is Glycogen synthase from Nitrosospira multiformis (strain ATCC 25196 / NCIMB 11849 / C 71).